The sequence spans 92 residues: MPKQSKMSNVAYEQLNQDADRILHLIKVQMDNLTLPSCPLYEEVLDTQMFGLQKEVDFAVKLGLVDKEDGKNLMLRLEKELSKLHEAFTNVK.

This sequence belongs to the UPF0358 family.

This is UPF0358 protein SH1840 from Staphylococcus haemolyticus (strain JCSC1435).